The chain runs to 127 residues: Biogenesis of lysosome-related organelles complex 1 subunit 2 (127 aa).

It belongs to the BLOC1S2 family. As to quaternary structure, component of the biogenesis of lysosome-related organelles complex-1 (BLOC-1). Interacts with BLOS1 and SNX1.

It localises to the cytoplasm. The protein localises to the endosome. Functionally, component of the biogenesis of lysosome-related organelles complex-1 (BLOC-1), a complex that mediates the vacuolar degradative transport via the intracellular vesicle trafficking from the endosome to the vacuole. The sequence is that of Biogenesis of lysosome-related organelles complex 1 subunit 2 (BLOS2) from Arabidopsis thaliana (Mouse-ear cress).